We begin with the raw amino-acid sequence, 440 residues long: Acetylornithine deacetylase (440 aa).

Histidine 101 is a binding site for Zn(2+). Aspartate 103 is an active-site residue. A Zn(2+)-binding site is contributed by aspartate 133. Catalysis depends on glutamate 167, which acts as the Proton acceptor. Residues glutamate 168 and histidine 412 each contribute to the Zn(2+) site.

The protein belongs to the peptidase M20A family. ArgE subfamily. Homodimer. Zn(2+) serves as cofactor. The cofactor is Co(2+).

It catalyses the reaction N(2)-acetyl-L-ornithine + H2O = L-ornithine + acetate. The protein operates within amino-acid biosynthesis; L-arginine biosynthesis; L-ornithine from N(2)-acetyl-L-ornithine (linear): step 1/1. In Arabidopsis thaliana (Mouse-ear cress), this protein is Acetylornithine deacetylase.